We begin with the raw amino-acid sequence, 372 residues long: Glutamate 5-kinase (372 aa).

Position 14 (lysine 14) interacts with ATP. Substrate-binding residues include serine 54, aspartate 141, and asparagine 153. 173–174 serves as a coordination point for ATP; the sequence is TD. The 79-residue stretch at 280–358 folds into the PUA domain; that stretch reads RGTLVLDEGA…DAIVGVLGYM (79 aa).

The protein belongs to the glutamate 5-kinase family.

The protein resides in the cytoplasm. The enzyme catalyses L-glutamate + ATP = L-glutamyl 5-phosphate + ADP. The protein operates within amino-acid biosynthesis; L-proline biosynthesis; L-glutamate 5-semialdehyde from L-glutamate: step 1/2. Functionally, catalyzes the transfer of a phosphate group to glutamate to form L-glutamate 5-phosphate. The polypeptide is Glutamate 5-kinase (Pseudomonas fluorescens (strain ATCC BAA-477 / NRRL B-23932 / Pf-5)).